The primary structure comprises 118 residues: Small ribosomal subunit protein uS13 (118 aa).

The tract at residues 92 to 118 (KKHLPVRGQRTKTNARTRKGPRKPIKK) is disordered.

The protein belongs to the universal ribosomal protein uS13 family. Part of the 30S ribosomal subunit. Forms a loose heterodimer with protein S19. Forms two bridges to the 50S subunit in the 70S ribosome.

Located at the top of the head of the 30S subunit, it contacts several helices of the 16S rRNA. In the 70S ribosome it contacts the 23S rRNA (bridge B1a) and protein L5 of the 50S subunit (bridge B1b), connecting the 2 subunits; these bridges are implicated in subunit movement. Contacts the tRNAs in the A and P-sites. The protein is Small ribosomal subunit protein uS13 of Wigglesworthia glossinidia brevipalpis.